Here is a 480-residue protein sequence, read N- to C-terminus: Aspartyl/glutamyl-tRNA(Asn/Gln) amidotransferase subunit B (480 aa).

Belongs to the GatB/GatE family. GatB subfamily. As to quaternary structure, heterotrimer of A, B and C subunits.

The catalysed reaction is L-glutamyl-tRNA(Gln) + L-glutamine + ATP + H2O = L-glutaminyl-tRNA(Gln) + L-glutamate + ADP + phosphate + H(+). It carries out the reaction L-aspartyl-tRNA(Asn) + L-glutamine + ATP + H2O = L-asparaginyl-tRNA(Asn) + L-glutamate + ADP + phosphate + 2 H(+). Allows the formation of correctly charged Asn-tRNA(Asn) or Gln-tRNA(Gln) through the transamidation of misacylated Asp-tRNA(Asn) or Glu-tRNA(Gln) in organisms which lack either or both of asparaginyl-tRNA or glutaminyl-tRNA synthetases. The reaction takes place in the presence of glutamine and ATP through an activated phospho-Asp-tRNA(Asn) or phospho-Glu-tRNA(Gln). The polypeptide is Aspartyl/glutamyl-tRNA(Asn/Gln) amidotransferase subunit B (Caldicellulosiruptor saccharolyticus (strain ATCC 43494 / DSM 8903 / Tp8T 6331)).